We begin with the raw amino-acid sequence, 501 residues long: ATP synthase subunit alpha, chloroplastic (501 aa).

170 to 177 (GDRQTGKT) serves as a coordination point for ATP.

Belongs to the ATPase alpha/beta chains family. In terms of assembly, F-type ATPases have 2 components, CF(1) - the catalytic core - and CF(0) - the membrane proton channel. CF(1) has five subunits: alpha(3), beta(3), gamma(1), delta(1), epsilon(1). CF(0) has four main subunits: a, b, b' and c.

It localises to the plastid. Its subcellular location is the chloroplast thylakoid membrane. The enzyme catalyses ATP + H2O + 4 H(+)(in) = ADP + phosphate + 5 H(+)(out). In terms of biological role, produces ATP from ADP in the presence of a proton gradient across the membrane. The alpha chain is a regulatory subunit. This Nephroselmis olivacea (Green alga) protein is ATP synthase subunit alpha, chloroplastic.